Consider the following 310-residue polypeptide: tRNA-cytidine(32) 2-sulfurtransferase (310 aa).

The PP-loop motif motif lies at 47 to 52; sequence SGGKDS. [4Fe-4S] cluster-binding residues include Cys122, Cys125, and Cys213.

Belongs to the TtcA family. Homodimer. Mg(2+) serves as cofactor. Requires [4Fe-4S] cluster as cofactor.

Its subcellular location is the cytoplasm. The catalysed reaction is cytidine(32) in tRNA + S-sulfanyl-L-cysteinyl-[cysteine desulfurase] + AH2 + ATP = 2-thiocytidine(32) in tRNA + L-cysteinyl-[cysteine desulfurase] + A + AMP + diphosphate + H(+). Its pathway is tRNA modification. Catalyzes the ATP-dependent 2-thiolation of cytidine in position 32 of tRNA, to form 2-thiocytidine (s(2)C32). The sulfur atoms are provided by the cysteine/cysteine desulfurase (IscS) system. This chain is tRNA-cytidine(32) 2-sulfurtransferase, found in Cronobacter sakazakii (strain ATCC BAA-894) (Enterobacter sakazakii).